The sequence spans 1481 residues: Protein shortage in chiasmata 1 ortholog (1481 aa).

Disordered stretches follow at residues 479–498 and 512–560; these read TDVH…EKEV and KSKV…IQAS. The span at 513 to 531 shows a compositional bias: basic and acidic residues; that stretch reads SKVEANPKNDQEPEARIMQ. Residues 543-560 are compositionally biased toward low complexity; the sequence is SSQVPSAESASSSQIQAS.

It belongs to the XPF family. Highly divergent. Interacts with TEX11. Interacts with SPO16. In terms of tissue distribution, mainly expressed in adult testis.

Its subcellular location is the chromosome. Functionally, ATPase required during meiosis for the formation of crossover recombination intermediates. Binds DNA: preferentially binds to single-stranded DNA and DNA branched structures. Does not show nuclease activity in vitro, but shows ATPase activity, which is stimulated by the presence of single-stranded DNA. Plays a key role in homologous recombination and crossing-over in meiotic prophase I in male and female germ cells. Required for proper synaptonemal complex assembly and homologous chromosome pairing. Required for recruitment of TEX11 and MSH4 to recombination intermediates. This chain is Protein shortage in chiasmata 1 ortholog, found in Mus musculus (Mouse).